The primary structure comprises 365 residues: Aminomethyltransferase (365 aa).

It belongs to the GcvT family. The glycine cleavage system is composed of four proteins: P, T, L and H.

The catalysed reaction is N(6)-[(R)-S(8)-aminomethyldihydrolipoyl]-L-lysyl-[protein] + (6S)-5,6,7,8-tetrahydrofolate = N(6)-[(R)-dihydrolipoyl]-L-lysyl-[protein] + (6R)-5,10-methylene-5,6,7,8-tetrahydrofolate + NH4(+). Its function is as follows. The glycine cleavage system catalyzes the degradation of glycine. The sequence is that of Aminomethyltransferase from Natranaerobius thermophilus (strain ATCC BAA-1301 / DSM 18059 / JW/NM-WN-LF).